The sequence spans 70 residues: DNA-directed RNA polymerase subunit omega (70 aa).

It belongs to the RNA polymerase subunit omega family. The RNAP catalytic core consists of 2 alpha, 1 beta, 1 beta' and 1 omega subunit. When a sigma factor is associated with the core the holoenzyme is formed, which can initiate transcription.

It carries out the reaction RNA(n) + a ribonucleoside 5'-triphosphate = RNA(n+1) + diphosphate. Its function is as follows. Promotes RNA polymerase assembly. Latches the N- and C-terminal regions of the beta' subunit thereby facilitating its interaction with the beta and alpha subunits. The protein is DNA-directed RNA polymerase subunit omega of Bacillus cereus (strain G9842).